The sequence spans 183 residues: Adenine phosphoribosyltransferase (183 aa).

This sequence belongs to the purine/pyrimidine phosphoribosyltransferase family. As to quaternary structure, homodimer.

The protein localises to the cytoplasm. It catalyses the reaction AMP + diphosphate = 5-phospho-alpha-D-ribose 1-diphosphate + adenine. Its pathway is purine metabolism; AMP biosynthesis via salvage pathway; AMP from adenine: step 1/1. Catalyzes a salvage reaction resulting in the formation of AMP, that is energically less costly than de novo synthesis. This is Adenine phosphoribosyltransferase from Shigella flexneri serotype 5b (strain 8401).